Consider the following 182-residue polypeptide: FMN reductase (NADH) RutF (182 aa).

The protein belongs to the non-flavoprotein flavin reductase family. RutF subfamily.

The enzyme catalyses FMNH2 + NAD(+) = FMN + NADH + 2 H(+). Functionally, catalyzes the reduction of FMN to FMNH2 which is used to reduce pyrimidine by RutA via the Rut pathway. In Yersinia enterocolitica serotype O:8 / biotype 1B (strain NCTC 13174 / 8081), this protein is FMN reductase (NADH) RutF.